The primary structure comprises 211 residues: tRNA (guanine-N(7)-)-methyltransferase (211 aa).

S-adenosyl-L-methionine is bound by residues glutamate 43, aspartate 68, asparagine 95, and asparagine 117. Substrate contacts are provided by residues lysine 121, aspartate 153, and 190–193 (TEYE).

This sequence belongs to the class I-like SAM-binding methyltransferase superfamily. TrmB family.

The catalysed reaction is guanosine(46) in tRNA + S-adenosyl-L-methionine = N(7)-methylguanosine(46) in tRNA + S-adenosyl-L-homocysteine. It functions in the pathway tRNA modification; N(7)-methylguanine-tRNA biosynthesis. Functionally, catalyzes the formation of N(7)-methylguanine at position 46 (m7G46) in tRNA. The sequence is that of tRNA (guanine-N(7)-)-methyltransferase from Clostridium kluyveri (strain ATCC 8527 / DSM 555 / NBRC 12016 / NCIMB 10680 / K1).